The chain runs to 247 residues: MADS-box transcription factor 1 (247 aa).

An MADS-box domain is found at 1-61; it reads MGRGRVELKR…GKLYEFCSTS (61 aa). The region spanning 91–181 is the K-box domain; it reads ELSSQQEYLK…RQRMEGYQIN (91 aa).

As to expression, expressed abundantly in the seed coat and to lesser extent in young buds, carpels, petals, and stamen.

The protein resides in the nucleus. Its function is as follows. Probable transcription factor. The sequence is that of MADS-box transcription factor 1 from Pisum sativum (Garden pea).